Reading from the N-terminus, the 273-residue chain is SPRY domain-containing SOCS box protein 1 (273 aa).

Tyr-31 bears the Phosphotyrosine mark. Positions 33–231 constitute a B30.2/SPRY domain; it reads KPTRLDLLLD…IRMRYLNGLD (199 aa). Positions 232–273 constitute an SOCS box domain; the sequence is PEPLPLMDLCRRSVRLALGKGRLGEIHALPLPASLKAYLLYQ.

The protein belongs to the SPSB family. In terms of assembly, component of the probable ECS(SPSB1) E3 ubiquitin-protein ligase complex which contains CUL5, RNF7/RBX2, Elongin BC complex and SPSB1. Interacts with CUL5, RNF7, ELOB and ELOC. Directly interacts with MET tyrosine kinase domain in the presence and in the absence of HGF, however HGF treatment has a positive effect on this interaction. When phosphorylated, interacts with RASA1 without affecting its stability. Interacts (via B30.2/SPRY domain) with PAWR; this interaction is direct and occurs in association with the Elongin BC complex. Interacts with NOS2 and EPHB2.

The protein resides in the cytoplasm. It is found in the cytosol. The protein operates within protein modification; protein ubiquitination. Functionally, substrate recognition component of a SCF-like ECS (Elongin BC-CUL2/5-SOCS-box protein) E3 ubiquitin-protein ligase complex which mediates the ubiquitination and subsequent proteasomal degradation of target proteins. Negatively regulates nitric oxide (NO) production and limits cellular toxicity in activated macrophages by mediating the ubiquitination and proteasomal degradation of NOS2. Acts as a bridge which links NOS2 with the ECS E3 ubiquitin ligase complex components ELOC and CUL5. The polypeptide is SPRY domain-containing SOCS box protein 1 (SPSB1) (Bos taurus (Bovine)).